The sequence spans 255 residues: Type III pantothenate kinase (255 aa).

6 to 13 (DIGNTNIV) contributes to the ATP binding site. 107–110 (GSDC) contributes to the substrate binding site. Aspartate 109 (proton acceptor) is an active-site residue. Aspartate 129 serves as a coordination point for K(+). Threonine 132 is an ATP binding site. Threonine 184 is a substrate binding site.

This sequence belongs to the type III pantothenate kinase family. Homodimer. NH4(+) is required as a cofactor. K(+) serves as cofactor.

It is found in the cytoplasm. It catalyses the reaction (R)-pantothenate + ATP = (R)-4'-phosphopantothenate + ADP + H(+). The protein operates within cofactor biosynthesis; coenzyme A biosynthesis; CoA from (R)-pantothenate: step 1/5. In terms of biological role, catalyzes the phosphorylation of pantothenate (Pan), the first step in CoA biosynthesis. The polypeptide is Type III pantothenate kinase (Bifidobacterium longum subsp. infantis (strain ATCC 15697 / DSM 20088 / JCM 1222 / NCTC 11817 / S12)).